A 321-amino-acid chain; its full sequence is MLNNEYKNSSLKIFSLKGNEALAQEVADQVGIELGKCSVKRFSDGEIQINIEESIRGCDVFIIQPTSYPVNLHLMELLIMIDACKRASAATINIVVPYYGYARQDRKARSREPITAKLVANLIETAGATRMIALDLHAPQIQGFFDIPIDHLMGVPILAKHFKDDPNINPEECVVVSPDHGGVTRARKLADILKTPIAIIDKRRPRPNVAEVMNIVGEIEGRTAIIIDDIIDTAGTITLAAQALKDKGAKEVYACCTHPVLSGPAKERIENSAIKELIVTNSIHLDEDRKPSNTKELSVAGLIAQAIIRVYERESVSVLFD.

Residues 44–46 (DGE) and 103–104 (RQ) each bind ATP. Mg(2+) contacts are provided by His-137 and Asp-179. Residue Lys-202 is part of the active site. Residues Arg-204, Asp-228, and 232–236 (DTAGT) each bind D-ribose 5-phosphate.

Belongs to the ribose-phosphate pyrophosphokinase family. Class I subfamily. Homohexamer. The cofactor is Mg(2+).

The protein localises to the cytoplasm. The enzyme catalyses D-ribose 5-phosphate + ATP = 5-phospho-alpha-D-ribose 1-diphosphate + AMP + H(+). Its pathway is metabolic intermediate biosynthesis; 5-phospho-alpha-D-ribose 1-diphosphate biosynthesis; 5-phospho-alpha-D-ribose 1-diphosphate from D-ribose 5-phosphate (route I): step 1/1. Its function is as follows. Involved in the biosynthesis of the central metabolite phospho-alpha-D-ribosyl-1-pyrophosphate (PRPP) via the transfer of pyrophosphoryl group from ATP to 1-hydroxyl of ribose-5-phosphate (Rib-5-P). This is Ribose-phosphate pyrophosphokinase from Staphylococcus aureus (strain Mu50 / ATCC 700699).